The following is a 478-amino-acid chain: Odorant receptor coreceptor (478 aa).

The Cytoplasmic segment spans residues M1–Y43. Residues S44 to M64 traverse the membrane as a helical segment. Topologically, residues N65–T73 are extracellular. The helical transmembrane segment at A74–V94 threads the bilayer. Topologically, residues N95–L133 are cytoplasmic. A helical transmembrane segment spans residues L134–F154. The Extracellular segment spans residues G155–A187. Residue N167 is glycosylated (N-linked (GlcNAc...) asparagine). The chain crosses the membrane as a helical span at residues M188–M208. Residues C209–L343 lie on the Cytoplasmic side of the membrane. Residues V344–I364 form a helical membrane-spanning segment. Over K365–Y382 the chain is Extracellular. Residues G383 to F403 traverse the membrane as a helical segment. The Cytoplasmic segment spans residues G404–T454. Residues V455 to V475 form a helical membrane-spanning segment. The Extracellular portion of the chain corresponds to Q476–K478.

Belongs to the insect chemoreceptor superfamily. Heteromeric odorant receptor channel (TC 1.A.69) family. Orco subfamily. As to quaternary structure, heterodimer with conventional odorant receptors (ORs). Complexes exist early in the endomembrane system in olfactory sensory neurons (OSNs), coupling these complexes to the conserved ciliary trafficking pathway. In terms of tissue distribution, found specifically within most antennal and maxillary palp sensilla, as well as in a subset of proboscis sensilla.

It localises to the cell membrane. Its function is as follows. Odorant coreceptor which complexes with conventional odorant receptors (ORs) to form odorant-sensing units, providing sensitive and prolonged odorant signaling and calcium permeability. Orco is a universal and integral part of the functional odorant receptor, involved in the dendritic localization of other olfactory receptors. Plays a key role in preferred attraction of females for humans over non-human hosts for blood feeding. Human attraction plays a crucial role in the transmission of dengue and yellow fever by the mosquito. Also required for the response to the insect repellent IR3535; or to N,N-Diethyl-meta-toluamide (DEET), the most widely used insect repellent worldwide. The polypeptide is Odorant receptor coreceptor (SGPRor7) (Aedes aegypti (Yellowfever mosquito)).